A 132-amino-acid polypeptide reads, in one-letter code: Protein p15 (132 aa).

In terms of biological role, may play a role in infectivity. In Panicum mosaic virus (strain United States/Kansas 109S) (PMV), this protein is Protein p15.